The chain runs to 197 residues: Imidazoleglycerol-phosphate dehydratase (197 aa).

The protein belongs to the imidazoleglycerol-phosphate dehydratase family.

The protein resides in the cytoplasm. It catalyses the reaction D-erythro-1-(imidazol-4-yl)glycerol 3-phosphate = 3-(imidazol-4-yl)-2-oxopropyl phosphate + H2O. It participates in amino-acid biosynthesis; L-histidine biosynthesis; L-histidine from 5-phospho-alpha-D-ribose 1-diphosphate: step 6/9. This chain is Imidazoleglycerol-phosphate dehydratase, found in Thioalkalivibrio sulfidiphilus (strain HL-EbGR7).